A 509-amino-acid chain; its full sequence is Photosystem II CP47 reaction center protein (509 aa).

Helical transmembrane passes span 21–36 (SVHL…WAGS), 101–115 (IVLS…IWHW), 140–156 (GIHL…FGAF), 203–218 (IAAG…FHLN), 237–252 (VLSS…SFVV), and 457–472 (NFAL…HGSR).

This sequence belongs to the PsbB/PsbC family. PsbB subfamily. PSII is composed of 1 copy each of membrane proteins PsbA, PsbB, PsbC, PsbD, PsbE, PsbF, PsbH, PsbI, PsbJ, PsbK, PsbL, PsbM, PsbT, PsbY, PsbZ, Psb30/Ycf12, at least 3 peripheral proteins of the oxygen-evolving complex and a large number of cofactors. It forms dimeric complexes. Requires Binds multiple chlorophylls. PSII binds additional chlorophylls, carotenoids and specific lipids. as cofactor.

It is found in the plastid. The protein localises to the chloroplast thylakoid membrane. One of the components of the core complex of photosystem II (PSII). It binds chlorophyll and helps catalyze the primary light-induced photochemical processes of PSII. PSII is a light-driven water:plastoquinone oxidoreductase, using light energy to abstract electrons from H(2)O, generating O(2) and a proton gradient subsequently used for ATP formation. The polypeptide is Photosystem II CP47 reaction center protein (Cyanidium caldarium (Red alga)).